A 105-amino-acid polypeptide reads, in one-letter code: Large ribosomal subunit protein uL24 (105 aa).

This sequence belongs to the universal ribosomal protein uL24 family. In terms of assembly, part of the 50S ribosomal subunit.

Functionally, one of two assembly initiator proteins, it binds directly to the 5'-end of the 23S rRNA, where it nucleates assembly of the 50S subunit. In terms of biological role, one of the proteins that surrounds the polypeptide exit tunnel on the outside of the subunit. The sequence is that of Large ribosomal subunit protein uL24 from Clostridium botulinum (strain ATCC 19397 / Type A).